We begin with the raw amino-acid sequence, 203 residues long: Small ribosomal subunit protein uS4c (203 aa).

The interval 15-43 (LGSLPGLTSKRPRSGSDLRNQSRSGKRSQ) is disordered. An S4 RNA-binding domain is found at 89–169 (MRLDNILFRL…LPKHLTLHSL (81 aa)).

Belongs to the universal ribosomal protein uS4 family. In terms of assembly, part of the 30S ribosomal subunit. Contacts protein S5. The interaction surface between S4 and S5 is involved in control of translational fidelity.

The protein resides in the plastid. It is found in the chloroplast. One of the primary rRNA binding proteins, it binds directly to 16S rRNA where it nucleates assembly of the body of the 30S subunit. Functionally, with S5 and S12 plays an important role in translational accuracy. The chain is Small ribosomal subunit protein uS4c (rps4) from Illicium oligandrum (Star anise).